The sequence spans 1277 residues: MAHTQRQQGGSRGQWSRCLLLLLLLPLAAQPGRAAIQIPSSYYISDLKIPPAITTQPESVTVFSVEDLVMRCEASGNPSPTFHWTKDGEEFDPSSDPEMKVTEEAGSSVFYTLSNTMDTLKQYQGKYICYASNELGTAVSNAAVLMIDAPPVQQKEKKVTEKAEAGHSIALSCNPPQSSMQPIIHWMDNRLRHIRLSDRVMVGKDGNLYFANLLTEDSRNDYTCNIQYLATRTILAKEPITLTVNPSNLVPRNRRPQMMRPTGSHSTYHALRGQTLELECIVQGLPTPKVSWLRKDGEMSESRISKDMFDRRLQFTNISESDGGEYQCTAENVQGRTFHTYTVTVEASPYWTNAPVSQLYAPGETVKLDCQADGIPSPTITWTVNGVPLSATSLEPRRSLTESGSLILKDVIFGDTAIYQCQASNKHGTILANTNVYVIELPPQILTENGNTYTFVEGQKALLECETFGSPKPKVTWESSSISLLLADPRVNLLTNGGLEIANVSHDDEGIYTCLVQGSNISVNAEVEVLNRTVILSPPQALRLQPGKTAIFTCLYVTDPKLSSPLLQWRKNDQKIFESHSDKKYTFDGPGLIISNVEPGDEGVYTCQIITKLDMVEASSTLTLCDRPDPPVHLQVTNAKHRVVTLNWTPGDDNNSPILEYVVEFEDQDMKENGWEELKRVAADKKHVNLPLWPYMSYRFRVIAINDQGKSDPSKLSDLYKTPADAPDSNPEDVRSESTDPDTLVITWEEMDKRNFNGPDFKYLVMWRRVVGSGPDWHEEYTIAPPFIVTDVQNFSAFEIKVQAVNKKGLGPEPDPIIGYSGEDVPLEAPLNLGVLLENSTTIRVTWSAVDKETVRGHLLGYKIYLTWGHHRNSRAQEPENIVMVQTGANEEKKSITNLRPYCHYDLAISAFNSKGEGPLSEKTSFMTPEGVPGPPMSMQMTSPSESEITLHWTPPSKPNGILLGYSLQYRKMQSDDNPLQVVDIASPEITHLTLKGLDRHSHYQFLLMARTAAGKGLSIEILGATTLEGLPPANISLSAEERSVNLSWEARKRHRTVGFQIHYFSKNGTKNGGKWKKTEMVNSSLQFFQLQGLTPGSHYRLLFTYKNNTFWETEIQTKGTSVTEVQPSFATQGWFIGVVSAVVLLLLVLLILCFIKRSKGGKYSVKDKEDGPMDSEARPMKDETFGEYRSLESDLEEKRTASQPSLGEDSKLCSEDNLDFNGSSAVTTELNMDESLASQFSRHSEGPEPFHGVPDNSPLNPAANPPATNGAPSFLN.

An N-terminal signal peptide occupies residues 1–34 (MAHTQRQQGGSRGQWSRCLLLLLLLPLAAQPGRA). The Extracellular segment spans residues 35–1135 (AIQIPSSYYI…VQPSFATQGW (1101 aa)). 5 consecutive Ig-like C2-type domains span residues 51–140 (PAIT…TAVS), 150–241 (PPVQ…EPIT), 256–344 (PQMM…YTVT), 349–437 (PYWT…TNVY), and 443–528 (PQIL…AEVE). 5 disulfides stabilise this stretch: Cys-72/Cys-129, Cys-173/Cys-224, Cys-280/Cys-328, Cys-370/Cys-421, and Cys-465/Cys-514. N-linked (GlcNAc...) asparagine glycosylation is present at Asn-317. Asn-503, Asn-520, and Asn-531 each carry an N-linked (GlcNAc...) asparagine glycan. Residues 532 to 623 (RTVILSPPQA…DMVEASSTLT (92 aa)) form the Ig-like C2-type 6 domain. Cys-554 and Cys-607 are oxidised to a cystine. 5 consecutive Fibronectin type-III domains span residues 630–725 (PPVH…TPAD), 730–824 (NPED…SGED), 829–931 (APLN…TPEG), 935–1030 (PPMS…TLEG), and 1032–1129 (PPAN…VQPS). A disordered region spans residues 714-740 (SKLSDLYKTPADAPDSNPEDVRSESTD). N-linked (GlcNAc...) asparagine glycosylation is found at Asn-794 and Asn-839. Asn-1035, Asn-1046, Asn-1068, Asn-1083, and Asn-1108 each carry an N-linked (GlcNAc...) asparagine glycan. A helical membrane pass occupies residues 1136–1156 (FIGVVSAVVLLLLVLLILCFI). Residues 1157–1277 (KRSKGGKYSV…ATNGAPSFLN (121 aa)) are Cytoplasmic-facing. Disordered regions lie at residues 1163-1216 (KYSV…LCSE) and 1232-1277 (NMDE…SFLN). Residues 1165 to 1201 (SVKDKEDGPMDSEARPMKDETFGEYRSLESDLEEKRT) are compositionally biased toward basic and acidic residues. Residues 1232–1242 (NMDESLASQFS) show a composition bias toward polar residues. The segment covering 1255–1277 (PDNSPLNPAANPPATNGAPSFLN) has biased composition (low complexity).

This sequence belongs to the immunoglobulin superfamily. L1/neurofascin/NgCAM family.

Its subcellular location is the cell membrane. The protein resides in the cell projection. It localises to the growth cone. Its function is as follows. Neural cell adhesion molecule involved in the dynamics of cell adhesion and in the generation of transmembrane signals at tyrosine kinase receptors. During brain development, critical in multiple processes, including neuronal migration, axonal growth and fasciculation, and synaptogenesis. In the mature brain, plays a role in the dynamics of neuronal structure and function, including synaptic plasticity. This Takifugu rubripes (Japanese pufferfish) protein is Neural cell adhesion molecule L1 (l1cam).